Consider the following 74-residue polypeptide: Translational regulator CsrA (74 aa).

The protein belongs to the CsrA/RsmA family. In terms of assembly, homodimer; the beta-strands of each monomer intercalate to form a hydrophobic core, while the alpha-helices form wings that extend away from the core.

It is found in the cytoplasm. In terms of biological role, a translational regulator that binds mRNA to regulate translation initiation and/or mRNA stability. Usually binds in the 5'-UTR at or near the Shine-Dalgarno sequence preventing ribosome-binding, thus repressing translation. Its main target seems to be the major flagellin gene, while its function is anatagonized by FliW. The sequence is that of Translational regulator CsrA from Alkaliphilus oremlandii (strain OhILAs) (Clostridium oremlandii (strain OhILAs)).